Reading from the N-terminus, the 152-residue chain is Deoxyuridine 5'-triphosphate nucleotidohydrolase (152 aa).

Residues 70–72, asparagine 83, 87–89, and methionine 97 contribute to the substrate site; these read RSG and LID.

The protein belongs to the dUTPase family. Mg(2+) serves as cofactor.

It catalyses the reaction dUTP + H2O = dUMP + diphosphate + H(+). It functions in the pathway pyrimidine metabolism; dUMP biosynthesis; dUMP from dCTP (dUTP route): step 2/2. Functionally, this enzyme is involved in nucleotide metabolism: it produces dUMP, the immediate precursor of thymidine nucleotides and it decreases the intracellular concentration of dUTP so that uracil cannot be incorporated into DNA. This is Deoxyuridine 5'-triphosphate nucleotidohydrolase from Buchnera aphidicola subsp. Baizongia pistaciae (strain Bp).